The sequence spans 253 residues: Trypsin delta (253 aa).

The first 22 residues, 1–22, serve as a signal peptide directing secretion; the sequence is MLKFVILLSAVACALGGTVPEG. Residues 23-30 constitute a propeptide, activation peptide; the sequence is LLPQLDGR. In terms of domain architecture, Peptidase S1 spans 31–253; that stretch reads IVGGSATTIS…ALRSWVISNA (223 aa). Cysteine 56 and cysteine 72 are oxidised to a cystine. Catalysis depends on charge relay system residues histidine 71 and aspartate 116. Intrachain disulfides connect cysteine 180/cysteine 197 and cysteine 206/cysteine 230. Serine 210 (charge relay system) is an active-site residue.

This sequence belongs to the peptidase S1 family.

The protein resides in the secreted. The protein localises to the extracellular space. The catalysed reaction is Preferential cleavage: Arg-|-Xaa, Lys-|-Xaa.. This chain is Trypsin delta, found in Drosophila melanogaster (Fruit fly).